The following is a 175-amino-acid chain: Major spike protein G (175 aa).

The protein belongs to the microvirus G protein family. In terms of assembly, pentamerizes and interacts with H protein, F and B pentamers to form 12S pre-assembly complex. Joining of twelve 12S complex form the procapsid.

The protein resides in the virion. Its subcellular location is the host cytoplasm. Functionally, attaches the circulating virion to the bacterial lipopolysaccharides which serve as receptor for the virus. Determines the phage host-range. Probably triggers with protein H the injection of the phage DNA into the host cytoplasm upon conformational changes induced by the interaction with host lipopolysaccharides. The protein is Major spike protein G (G) of Escherichia coli C (Isolate Sanger).